The following is a 304-amino-acid chain: DCN1-like protein 3 (304 aa).

Disordered stretches follow at residues 1 to 87 (MGQC…EESS) and 284 to 304 (EGEGRGALSSGPEGLCPEEQT). Residue glycine 2 is the site of N-myristoyl glycine attachment. In terms of domain architecture, DCUN1 spans 86–278 (SSLQRLEELF…LFDTFVEWEM (193 aa)).

As to quaternary structure, part of a complex containing DCUN1D3, CUL3 and RBX1. Interacts (via the DCUN1 domain) with the unneddylated cullins: interacts with CUL1, CUL2, CUL3, CUL4A, CUL4B and CUL5; these interactions promote the cullin neddylation and the identity of the cullin dictates the affinity of the interaction. Interacts preferentially with CUL3; this interaction triggers the relocalization of CUL3 to the cell membrane where CUL3 is neddylated. Interacts (via DCUN1 domain) with RBX1. May also interact with regulators or subunits of cullin-RING ligases such as RNF7, ELOB and DDB1; these interactions are bridged by cullins. Interacts (via DCUN1 domain) with CAND1; this interaction is bridged by cullins and strongly inhibits cullin neddylation. These CAND-cullin-DCNL complexes can only be neddylated in the presence of a substrate adapter. Interacts (via DCUN1 domain) with the N-terminally acetylated form of UBE2M and UBE2F.

The protein localises to the cell membrane. It is found in the cytoplasm. It localises to the nucleus. The protein resides in the perinuclear region. Contributes to the neddylation of all cullins by transferring NEDD8 from N-terminally acetylated NEDD8-conjugating E2s enzyme to different cullin C-terminal domain-RBX complexes and may play a role in the cell cycle progression by regulating the SCF ubiquitin E3 ligase complex, after UV damage. At the cell membrane, can promote and as well inhibit cullins neddylation. The sequence is that of DCN1-like protein 3 from Bos taurus (Bovine).